Consider the following 153-residue polypeptide: Zinc finger protein GIS2 (153 aa).

7 consecutive CCHC-type zinc fingers follow at residues 4–21, 23–40, 47–64, 65–82, 92–109, 116–133, and 135–152; these read KACYVCGKIGHLAEDCDS, RLCYNCNKPGHVQTDCTM, KQCYNCGETGHVRSECTV, QRCFNCNQTGHISRECPE, VSCYKCGGPNHMAKDCMK, LKCYTCGQAGHMSRDCQN, and RLCYNCNETGHISKDCPK.

The protein resides in the cytoplasm. May act in the sexual differentiation pathway. This is Zinc finger protein GIS2 (GIS2) from Saccharomyces cerevisiae (strain ATCC 204508 / S288c) (Baker's yeast).